Consider the following 91-residue polypeptide: Small ribosomal subunit protein uS19 (91 aa).

It belongs to the universal ribosomal protein uS19 family.

Functionally, protein S19 forms a complex with S13 that binds strongly to the 16S ribosomal RNA. This chain is Small ribosomal subunit protein uS19, found in Prochlorococcus marinus subsp. pastoris (strain CCMP1986 / NIES-2087 / MED4).